The primary structure comprises 429 residues: 3-phosphoshikimate 1-carboxyvinyltransferase (429 aa).

The 3-phosphoshikimate site is built by Lys-11, Ser-12, and Arg-16. Lys-11 serves as a coordination point for phosphoenolpyruvate. The phosphoenolpyruvate site is built by Gly-82 and Arg-110. Residues Ser-155, Gln-157, Asp-302, and Lys-329 each coordinate 3-phosphoshikimate. Gln-157 contacts phosphoenolpyruvate. Catalysis depends on Asp-302, which acts as the Proton acceptor. 2 residues coordinate phosphoenolpyruvate: Arg-333 and Arg-385.

It belongs to the EPSP synthase family. As to quaternary structure, monomer.

The protein localises to the cytoplasm. It catalyses the reaction 3-phosphoshikimate + phosphoenolpyruvate = 5-O-(1-carboxyvinyl)-3-phosphoshikimate + phosphate. Its pathway is metabolic intermediate biosynthesis; chorismate biosynthesis; chorismate from D-erythrose 4-phosphate and phosphoenolpyruvate: step 6/7. Functionally, catalyzes the transfer of the enolpyruvyl moiety of phosphoenolpyruvate (PEP) to the 5-hydroxyl of shikimate-3-phosphate (S3P) to produce enolpyruvyl shikimate-3-phosphate and inorganic phosphate. The protein is 3-phosphoshikimate 1-carboxyvinyltransferase of Helicobacter pylori (strain HPAG1).